Consider the following 905-residue polypeptide: Clumping factor B (905 aa).

The first 44 residues, 1 to 44, serve as a signal peptide directing secretion; it reads MKKRIDYLSNKQNKYSIRRFTVGTTSVIVGATILFGIGNHQAQA. Positions 15-26 match the YSIRK-G/S signaling motif motif; that stretch reads YSIRRFTVGTTS. Composition is skewed to polar residues over residues 44 to 61 and 68 to 101; these read ASEQSNDTTQSSKNNASA and MIETPQLNTTANDTSDISANTNSANVDSTAKPMS. Positions 44-191 are disordered; sequence ASEQSNDTTQ…AQGTSKPSVR (148 aa). Residues 45 to 542 are ligand binding A region; sequence SEQSNDTTQS…GSADGDSAVN (498 aa). Over residues 102 to 119 the composition is skewed to low complexity; that stretch reads TQTSNTTTTEPASTNETP. A compositionally biased stretch (polar residues) spans 134-189; it reads QDQTVPQEANSQVDNKTTNDANSIATNSELKNPQTLDLPQSSPQTISNAQGTSKPS. An MIDAS-like motif motif is present at residues 272-276; the sequence is DYSNS. The segment at 530–877 is disordered; sequence YGGGSADGDS…ETGDKSENTN (348 aa). Pro residues predominate over residues 545–555; the sequence is DPTPGPPVDPE. Acidic residues predominate over residues 556–829; it reads PSPDPEPEPS…SDSDSDSDSD (274 aa). Residues 833–844 show a composition bias toward polar residues; the sequence is RVTPPNNEQKAP. Over residues 861 to 874 the composition is skewed to basic and acidic residues; it reads HKTDALPETGDKSE. Residues 866–870 carry the LPXTG sorting signal motif; sequence LPETG. Thr869 is modified (pentaglycyl murein peptidoglycan amidated threonine). A propeptide spans 870–905 (removed by sortase); it reads GDKSENTNATLFGAMMALLGSLLLFRKRKQDHKEKA.

Belongs to the serine-aspartate repeat-containing protein (SDr) family. Proteolytically cleaved by aureolysin (aur). This cleavage leads to the inactivation of ClfB.

It is found in the secreted. It localises to the cell wall. Cell surface-associated protein implicated in virulence by promoting bacterial attachment to both alpha- and beta-chains of human fibrinogen and inducing the formation of bacterial clumps. The protein is Clumping factor B (clfB) of Staphylococcus aureus (strain MSSA476).